Reading from the N-terminus, the 248-residue chain is MALLEICCYSMECALTAQQNGADRVELCAAPKEGGLTPSLGVLKSVRQRVTIPVHPIIRPRGGDFCYSDGEFAAILEDVRTVRELGFPGLVTGVLDVDGNVDMPRMEKIMAAAGPLAVTFHRAFDMCANPLNTLNNLAELGIARVLTSGQKSDALQGLSKIMELIAHRDAPIIMAGAGVRAENLHHFLDAGVLEVHSSAGAWQASPMRYRNQGLSMSSDAHADEYSRYVVDGAAVAEMKGIIERHQAK.

The protein belongs to the CutC family. Homodimer.

The protein resides in the cytoplasm. The chain is PF03932 family protein CutC from Escherichia coli O9:H4 (strain HS).